We begin with the raw amino-acid sequence, 521 residues long: MKFKLYWWEVFRWFSDTPSRSSERACEASRQVQHIKKDYVSYKCLVPSLPKHSWQAIILYMNTRLNNFVFIIYWSVLECKTSIYLLNILNKLGLIVSVPGKSFSSPKLLINIRSFFNGNKRLRIMSQSNPYNIWLYPLNILLSFPVHRKPKKLRSTEKIFEKNGFNCENREYPHDKNDKTYFVSGKSSEEELVRIERMNQKLAWIEATLNDLDNWKRYYSLSSFSFEMGDIPEEGQSSLSVEGESDSIVTTIAYESIGLVPRSITRTLSRFKTELTGQSSSLVLYEFRLAKYQALASLQYLGCLILIPWGISFPSERWLLKPWIKNWWNINQFQIFLNYFQEERASKRLQEVEELLWLDEVMLADSSSSEVQSQDLNRQIHDKTIQLVAMYNEDSIQTILHLLTDIIYFAIPSASFISGKKRLAVMNSWIQESFHSLSDTMKAFFILLLTDSCIGFHSPHGWEILISSLSKHLGFAHNKHIISCFVSTFPVISDTVFKYWIFRHLNRISPSIVATYHAMNE.

5 helical membrane-spanning segments follow: residues 68 to 88 (FVFIIYWSVLECKTSIYLLNI), 294 to 314 (ALASLQYLGCLILIPWGISFP), 399 to 419 (ILHLLTDIIYFAIPSASFISG), 446 to 466 (ILLLTDSCIGFHSPHGWEILI), and 481 to 501 (IISCFVSTFPVISDTVFKYWI).

It belongs to the CemA family.

It localises to the plastid. The protein localises to the chloroplast inner membrane. It catalyses the reaction K(+)(in) + H(+)(out) = K(+)(out) + H(+)(in). In terms of biological role, contributes to K(+)/H(+) antiport activity by supporting proton efflux to control proton extrusion and homeostasis in chloroplasts in a light-dependent manner to modulate photosynthesis. Prevents excessive induction of non-photochemical quenching (NPQ) under continuous-light conditions. Indirectly promotes efficient inorganic carbon uptake into chloroplasts. This is Potassium/proton antiporter CemA from Huperzia lucidula (Shining clubmoss).